The primary structure comprises 272 residues: uncharacterized protein (272 aa).

A run of 4 helical transmembrane segments spans residues 9–29 (PVGF…GSGV), 38–58 (LTSF…SFPP), 154–174 (AGEF…VLML), and 188–208 (AIAL…FNPI). Over 209–272 (AAKLEEKTES…KTKKGSVHEA (64 aa)) the chain is Cytoplasmic.

It belongs to the MotA family.

It localises to the cell membrane. In terms of biological role, may be involved in some transport function. This is an uncharacterized protein from Bacillus subtilis (strain 168).